A 247-amino-acid chain; its full sequence is MAVLEVCCYSMACAREAERCGADRIELCAAPQEGGLTPSYGVLVSVREAITLPVHPIVRPRGGDFCYTEQEFAAMLSDIRMVRELGFPGLVTGVLNADGQVDIPRMKKIMAAAGPLAVTFHRAFDLCADPRQAWKTLGELGVKRILTSGQQSSAEKGISLITELIAAGDTPIIMAGAGVRAANLPLLLQAGVKEVHSSAGQWLPSDMRFRHPGVSMSADPDADEYRRYAVNGEAVAEMKGIISAWRS.

This sequence belongs to the CutC family.

The protein localises to the cytoplasm. In Klebsiella pneumoniae (strain 342), this protein is PF03932 family protein CutC.